The sequence spans 1182 residues: MESMPSFLKDTPAWEKTAPVNGIVGQEPGTSPQDGLRHGALCLGEPAPFWRGVLSTPDSWLPPGFLQGPKDTLSLVEGEGPRNGERKGSWLGGKEGLRWKEAMLAHPLAFCGPACPPRYGPLIPEHSGGHPKSDPVAFRPLHCPFLLETKILERAPFWVPTCLPPYLMSSLPPERPYDWPLAPNPWVYSGSQPKVPSAFGLGSKGFYHKDPNILRPAKEPLAESGMLGLAPGGHLQQACESEGPSLHQRDGETGAGRQQNLCPVFLGYPDTVPRAPWPSCPPGLVHSLGNIWAGPGSNSLGYQLGPPATPRCPSPGPPTPPGGCCSSHLPAREGDLGPCRKCQDSPEGGSSGPGESSEERNKADSRACPPSHHTKLKKTWLTRHSEQFECPGGCSGKEESPATGLRALKRAGSPEVQGASRGPAPKRPSHPFPGTGRQGARAWQETPETIIGSKAEAEQQEEQRGPRDGRIRLQESRLVDTSCQHHLAGVTQCQSCVQAAGEVGVLTGHSQKSRRSPLEEKQLEEEDSSATSEEGGGGPGPEASLNKGLAKHLLSGLGDRLCRLLRKEREALAWAQREGQGPAMTEDSPGIPHCCSRCHHGLFNTHWRCSHCSHRLCVACGRIAGAGKNREKTGSQEQHTDDCAQEAGHAACSLILTQFVSSQALAELSTVMHQVWAKFDIRGHCFCQVDARVWAPGDGGQQKEPTEKTPPTPQPSCNGDSNRTKDIKEETPDSTESPAEDGAGRSPLPCPSLCELLASTAVKLCLGHDRIHMAFAPVTPALPSDDRITNILDSIIAQVVERKIQEKALGPGLRAGSGLRKGLSLPLSPVRTRLSPPGALLWLQEPRPKHGFHLFQEHWRQGQPVLVSGIQKTLRLSLWGMEALGTLGGQVQTLTALGPPQPTNLDSTAFWEGFSHPETRPKLDEGSVLLLHRTLGDKDASRVQNLASSLPLPEYCAHQGKLNLASYLPLGLTLHPLEPQLWAAYGVNSHRGHLGTKNLCVEVSDLISILVHAEAQLPPWYRAQKDFLSGLDGEGLWSPGSQTSTVWHVFRAQDAQRIRRFLQMVCPAGAGTLEPGAPGSCYLDAGLRRRLREEWGVSCWTLLQAPGEAVLVPAGAPHQVQGLVSTISVTQHFLSPETSALSAQLYHQGASLPPDHRMLYAQMDRAVFQAVKAAVGALQEAK.

4 disordered regions span residues 227–257 (LGLAPGGHLQQACESEGPSLHQRDGETGAGR), 302–380 (YQLG…KKTW), 411–443 (AGSPEVQGASRGPAPKRPSHPFPGTGRQGARAW), and 507–546 (TGHSQKSRRSPLEEKQLEEEDSSATSEEGGGGPGPEASLN). Residues 307-321 (PATPRCPSPGPPTPP) are compositionally biased toward pro residues. The LXXLL motif 1 motif lies at 561 to 565 (LCRLL). Residues 595–620 (CSRCHHGLFNTHWRCSHCSHRLCVAC) form a C6-type zinc finger. The interval 697–746 (GDGGQQKEPTEKTPPTPQPSCNGDSNRTKDIKEETPDSTESPAEDGAGRS) is disordered. Basic and acidic residues predominate over residues 722-731 (NRTKDIKEET). Residues 753-757 (LCELL) carry the LXXLL motif 2 motif. A JmjC domain is found at 939–1150 (DASRVQNLAS…LSAQLYHQGA (212 aa)). Residues Cys-1000, Glu-1002, and His-1118 each contribute to the Fe cation site.

It depends on Fe(2+) as a cofactor. As to expression, expressed predominantly in brain, hair follicles and interfollicular epidermis. No expression in dermis.

It localises to the nucleus. The catalysed reaction is N(6),N(6)-dimethyl-L-lysyl(9)-[histone H3] + 2 2-oxoglutarate + 2 O2 = L-lysyl(9)-[histone H3] + 2 formaldehyde + 2 succinate + 2 CO2. Functionally, histone demethylase that specifically demethylates both mono- and dimethylated 'Lys-9' of histone H3. May act as a transcription regulator controlling hair biology (via targeting of collagens), neural activity, and cell cycle. The polypeptide is Lysine-specific demethylase hairless (Hr) (Mus musculus (Mouse)).